The following is a 222-amino-acid chain: Interleukin-12 subunit alpha (222 aa).

Residues Met-1–Ala-25 form the signal peptide. Cystine bridges form between Cys-40-Cys-113, Cys-67-Cys-199, and Cys-88-Cys-126. N-linked (GlcNAc...) asparagine glycans are attached at residues Asn-42, Asn-96, and Asn-110.

The protein belongs to the IL-6 superfamily. Heterodimer with IL12B; disulfide-linked. This heterodimer is known as interleukin IL-12. Heterodimer with EBI3/IL27B; not disulfide-linked. This heterodimer is known as interleukin IL-35. Interacts with NBR1; this interaction promotes IL-12 secretion.

The protein resides in the secreted. Functionally, heterodimerizes with IL12B to form the IL-12 cytokine or with EBI3/IL27B to form the IL-35 cytokine. IL-12 is primarily produced by professional antigen-presenting cells (APCs) such as B-cells and dendritic cells (DCs) as well as macrophages and granulocytes and regulates T-cell and natural killer-cell responses, induces the production of interferon-gamma (IFN-gamma), favors the differentiation of T-helper 1 (Th1) cells and is an important link between innate resistance and adaptive immunity. Mechanistically, exerts its biological effects through a receptor composed of IL12R1 and IL12R2 subunits. Binding to the receptor results in the rapid tyrosine phosphorylation of a number of cellular substrates including the JAK family kinases TYK2 and JAK2. In turn, recruited STAT4 gets phosphorylated and translocates to the nucleus where it regulates cytokine/growth factor responsive genes. As part of IL-35, plays essential roles in maintaining the immune homeostasis of the liver microenvironment and also functions as an immune-suppressive cytokine. Mediates biological events through unconventional receptors composed of IL12RB2 and gp130/IL6ST heterodimers or homodimers. Signaling requires the transcription factors STAT1 and STAT4, which form a unique heterodimer that binds to distinct DNA sites. The polypeptide is Interleukin-12 subunit alpha (IL12A) (Equus caballus (Horse)).